Here is a 136-residue protein sequence, read N- to C-terminus: Galectin-7 (136 aa).

Positions 6–136 constitute a Galectin domain; sequence HKSSLPEGIR…DVQLDSVRIF (131 aa). 70-76 is an a beta-D-galactoside binding site; it reads WGREERG.

Monomer. In terms of tissue distribution, mainly expressed in stratified squamous epithelium.

Its subcellular location is the cytoplasm. The protein resides in the nucleus. It is found in the secreted. In terms of biological role, could be involved in cell-cell and/or cell-matrix interactions necessary for normal growth control. Pro-apoptotic protein that functions intracellularly upstream of JNK activation and cytochrome c release. This Homo sapiens (Human) protein is Galectin-7 (LGALS7).